We begin with the raw amino-acid sequence, 123 residues long: Large ribosomal subunit protein uL29x (123 aa).

This sequence belongs to the universal ribosomal protein uL29 family.

The protein is Large ribosomal subunit protein uL29x (RPL35C) of Arabidopsis thaliana (Mouse-ear cress).